Reading from the N-terminus, the 486-residue chain is Small ribosomal subunit protein uS4m (486 aa).

The 70-residue stretch at 103–172 (KRLDFALFRA…AKKPSFQEAL (70 aa)) folds into the S4 RNA-binding domain.

The protein belongs to the universal ribosomal protein uS4 family. Component of the mitochondrial small ribosomal subunit (mt-SSU). Mature yeast 74S mitochondrial ribosomes consist of a small (37S) and a large (54S) subunit. The 37S small subunit contains a 15S ribosomal RNA (15S mt-rRNA) and 34 different proteins. The 54S large subunit contains a 21S rRNA (21S mt-rRNA) and 46 different proteins. uS3m, uS4m and uS5m form the narrow entry site of the mRNA channel.

It localises to the mitochondrion. In terms of biological role, component of the mitochondrial ribosome (mitoribosome), a dedicated translation machinery responsible for the synthesis of mitochondrial genome-encoded proteins, including at least some of the essential transmembrane subunits of the mitochondrial respiratory chain. The mitoribosomes are attached to the mitochondrial inner membrane and translation products are cotranslationally integrated into the membrane. This Saccharomyces cerevisiae (strain ATCC 204508 / S288c) (Baker's yeast) protein is Small ribosomal subunit protein uS4m (NAM9).